Consider the following 336-residue polypeptide: Uridine nucleosidase 1 (336 aa).

Active-site residues include D29 and H260.

This sequence belongs to the IUNH family. Homodimer. Component of the NSH heterocomplex made of URH1/NSH1 and URH2/NSH2 which exhibits strong xanthosine nucleosidase activity. Interacts with URH2. In terms of tissue distribution, expressed ubiquitously in leaves, flowers, stems, pollen cells, root tip meristem and root vasculature.

The protein localises to the cytoplasm. It catalyses the reaction uridine + H2O = D-ribose + uracil. The catalysed reaction is xanthosine + H2O = D-ribose + xanthine. It carries out the reaction inosine + H2O = hypoxanthine + D-ribose. The enzyme catalyses adenosine + H2O = D-ribose + adenine. Functionally, involved in purine and pyrimidine breakdown rather than in pyrimidine salvage, especially in response to dark stress. Together with URH2, required for efficient inosine and xanthosine hydrolytic activities. Unable to use cytidine as a substrate. Can use uridine, inosine, adenosine as well as the cytokinin derivative isopentenyladenine-riboside as substrates. Also hydrolyzes xanthosine with high efficiency. This Arabidopsis thaliana (Mouse-ear cress) protein is Uridine nucleosidase 1.